We begin with the raw amino-acid sequence, 390 residues long: Mannitol-1-phosphate 5-dehydrogenase (390 aa).

3–14 (ALHFGAGNIGRG) is an NAD(+) binding site.

The protein belongs to the mannitol dehydrogenase family.

It catalyses the reaction D-mannitol 1-phosphate + NAD(+) = beta-D-fructose 6-phosphate + NADH + H(+). The sequence is that of Mannitol-1-phosphate 5-dehydrogenase from Buchnera aphidicola subsp. Baizongia pistaciae (strain Bp).